The chain runs to 373 residues: Transaldolase (373 aa).

Lysine 143 functions as the Schiff-base intermediate with substrate in the catalytic mechanism.

This sequence belongs to the transaldolase family. Type 2 subfamily.

Its subcellular location is the cytoplasm. The catalysed reaction is D-sedoheptulose 7-phosphate + D-glyceraldehyde 3-phosphate = D-erythrose 4-phosphate + beta-D-fructose 6-phosphate. The protein operates within carbohydrate degradation; pentose phosphate pathway; D-glyceraldehyde 3-phosphate and beta-D-fructose 6-phosphate from D-ribose 5-phosphate and D-xylulose 5-phosphate (non-oxidative stage): step 2/3. Functionally, transaldolase is important for the balance of metabolites in the pentose-phosphate pathway. The sequence is that of Transaldolase from Mycobacterium marinum (strain ATCC BAA-535 / M).